A 289-amino-acid chain; its full sequence is Energy-coupling factor transporter ATP-binding protein EcfA2 (289 aa).

An ABC transporter domain is found at 7–251; sequence IILDNVSYTY…IELLTKIEID (245 aa). An ATP-binding site is contributed by 44–51; sequence GTTGSGKS.

Belongs to the ABC transporter superfamily. Energy-coupling factor EcfA family. Forms a stable energy-coupling factor (ECF) transporter complex composed of 2 membrane-embedded substrate-binding proteins (S component), 2 ATP-binding proteins (A component) and 2 transmembrane proteins (T component).

Its subcellular location is the cell membrane. Its function is as follows. ATP-binding (A) component of a common energy-coupling factor (ECF) ABC-transporter complex. Unlike classic ABC transporters this ECF transporter provides the energy necessary to transport a number of different substrates. The polypeptide is Energy-coupling factor transporter ATP-binding protein EcfA2 (Mycoplasma capricolum subsp. capricolum (strain California kid / ATCC 27343 / NCTC 10154)).